The chain runs to 471 residues: Cysteine--tRNA ligase (471 aa).

Cysteine 29 lines the Zn(2+) pocket. A 'HIGH' region motif is present at residues 31–41; that stretch reads PTVYNYIHIGN. Zn(2+) contacts are provided by cysteine 209, histidine 234, and glutamate 238. A 'KMSKS' region motif is present at residues 266-270; sequence KMSKS. Lysine 269 contacts ATP.

The protein belongs to the class-I aminoacyl-tRNA synthetase family. In terms of assembly, monomer. Requires Zn(2+) as cofactor.

The protein resides in the cytoplasm. It carries out the reaction tRNA(Cys) + L-cysteine + ATP = L-cysteinyl-tRNA(Cys) + AMP + diphosphate. The protein is Cysteine--tRNA ligase of Listeria monocytogenes serovar 1/2a (strain ATCC BAA-679 / EGD-e).